The following is a 275-amino-acid chain: Phage-like element PBSX protein XkdF (275 aa).

The segment at K247 to L275 is disordered.

To B.subtilis YqbD.

The chain is Phage-like element PBSX protein XkdF (xkdF) from Bacillus subtilis (strain 168).